The chain runs to 295 residues: Alpha-ketoglutarate-dependent dioxygenase alkB homolog 3 (295 aa).

The segment at 1 to 48 is disordered; it reads MGDKRQRARVQGAWATPTKSQSAARPATPARSRPSQTPGPSWRSKEQQ. Over residues 22-35 the composition is skewed to low complexity; sequence SAARPATPARSRPS. Substrate-binding positions include W115 and 141-143; that span reads YTY. Positions 172 to 278 constitute a Fe2OG dioxygenase domain; that stretch reads TFNSLLCNFY…RVNLTFRTVY (107 aa). L177 is subject to (4R)-5-hydroxyleucine; alternate. At L177 the chain carries (4R)-5-oxoleucine; alternate. 179-181 provides a ligand contact to 2-oxoglutarate; the sequence is NFY. Fe cation is bound by residues H191 and D193. D194 serves as a coordination point for substrate. H257 provides a ligand contact to Fe cation. 2-oxoglutarate is bound by residues 269-275 and R275; that span reads RVNLTFR.

This sequence belongs to the alkB family. As to quaternary structure, interacts with the ASCC complex composed of ASCC1, ASCC2 and ASCC3. Interacts directly with ASCC3, and is thereby recruited to the ASCC complex. Interacts with OTUD4; the interaction is direct. Interacts with USP7 and USP9X. It depends on Fe(2+) as a cofactor. Ubiquitinated; undergoes 'Lys-48'-linked polyubiquitination. OTUD4 promotes USP7 and USP9X-dependent deubiquitination of 'Lys-48'-polyubiquitinated ALKBH3 promoting the repair of alkylated DNA lesions.

It localises to the nucleus. The protein resides in the cytoplasm. The catalysed reaction is an N(1)-methyladenosine in mRNA + 2-oxoglutarate + O2 = an adenosine in mRNA + formaldehyde + succinate + CO2. It catalyses the reaction a methylated nucleobase within DNA + 2-oxoglutarate + O2 = a nucleobase within DNA + formaldehyde + succinate + CO2. The enzyme catalyses an N(1)-methyl-2'-deoxyadenosine in single-stranded DNA + 2-oxoglutarate + O2 = a 2'-deoxyadenosine in single-stranded DNA + formaldehyde + succinate + CO2 + H(+). It carries out the reaction an N(3)-methyl-2'-deoxycytidine in single-stranded DNA + 2-oxoglutarate + O2 = a 2'-deoxycytidine in single-stranded DNA + formaldehyde + succinate + CO2 + H(+). The catalysed reaction is a 3,N(4)-etheno-2'-deoxycytidine in single-stranded DNA + 2-oxoglutarate + O2 + H2O = a 2'-deoxycytidine in single-stranded DNA + glyoxal + succinate + CO2. Activated by ascorbate. Functionally, dioxygenase that mediates demethylation of DNA and RNA containing 1-methyladenosine (m1A). Repairs alkylated DNA containing 1-methyladenosine (m1A) and 3-methylcytosine (m3C) by oxidative demethylation. Has a strong preference for single-stranded DNA. Able to process alkylated m3C within double-stranded regions via its interaction with ASCC3, which promotes DNA unwinding to generate single-stranded substrate needed for ALKBH3. Can repair exocyclic 3,N4-ethenocytosine adducs in single-stranded DNA. Also acts on RNA. Demethylates N(1)-methyladenosine (m1A) RNA, an epigenetic internal modification of messenger RNAs (mRNAs) highly enriched within 5'-untranslated regions (UTRs) and in the vicinity of start codons. Requires molecular oxygen, alpha-ketoglutarate and iron. The sequence is that of Alpha-ketoglutarate-dependent dioxygenase alkB homolog 3 from Rattus norvegicus (Rat).